The primary structure comprises 326 residues: Undecaprenyl-phosphate 4-deoxy-4-formamido-L-arabinose transferase (326 aa).

The next 2 membrane-spanning stretches (helical) occupy residues 235–255 (LLSVVGSVVALSGFLLAVLLI) and 270–290 (VFTLFAVLFTFIGAQFVGMGL).

This sequence belongs to the glycosyltransferase 2 family.

It localises to the cell inner membrane. It carries out the reaction UDP-4-deoxy-4-formamido-beta-L-arabinose + di-trans,octa-cis-undecaprenyl phosphate = 4-deoxy-4-formamido-alpha-L-arabinopyranosyl di-trans,octa-cis-undecaprenyl phosphate + UDP. The protein operates within glycolipid biosynthesis; 4-amino-4-deoxy-alpha-L-arabinose undecaprenyl phosphate biosynthesis; 4-amino-4-deoxy-alpha-L-arabinose undecaprenyl phosphate from UDP-4-deoxy-4-formamido-beta-L-arabinose and undecaprenyl phosphate: step 1/2. It functions in the pathway bacterial outer membrane biogenesis; lipopolysaccharide biosynthesis. Its function is as follows. Catalyzes the transfer of 4-deoxy-4-formamido-L-arabinose from UDP to undecaprenyl phosphate. The modified arabinose is attached to lipid A and is required for resistance to polymyxin and cationic antimicrobial peptides. The sequence is that of Undecaprenyl-phosphate 4-deoxy-4-formamido-L-arabinose transferase from Serratia proteamaculans (strain 568).